Reading from the N-terminus, the 329-residue chain is Transmembrane protein I329L (329 aa).

The signal sequence occupies residues 1 to 31 (MLRVFIFFVFLGSGLAGRIKPQITCKYFISE). N-linked (GlcNAc...) asparagine; by host glycans are attached at residues Asn32, Asn39, Asn44, Asn76, Asn82, and Asn101. Residues 32–239 (NNTWYKYNVT…NTERYKNCYP (208 aa)) lie on the Extracellular side of the membrane. One copy of the LRR repeat lies at 112–133 (ELKFLDLRYNNLQFIDYNILRK). N-linked (GlcNAc...) asparagine; by host glycosylation is found at Asn185 and Asn219. A disulfide bridge connects residues Cys195 and Cys237. Residues 240-260 (FVLVSILCSCISFLFLIICLL) traverse the membrane as a helical segment. At 261 to 329 (RSICKKYSCT…EKKASCSRRK (69 aa)) the chain is on the cytoplasmic side.

Belongs to the asfivirus I329L family. Post-translationally, highly glycosylated.

The protein localises to the host endoplasmic reticulum membrane. It localises to the host Golgi apparatus membrane. In terms of biological role, viral TLR3 homolog that probably prevents TLR3 dimerization and subsequent induction of IFN. Inhibits dsRNA-stimulated activation of NF-kB and IRF3. This Ornithodoros (relapsing fever ticks) protein is Transmembrane protein I329L.